The sequence spans 22 residues: Oxygen-evolving enhancer protein 2 (22 aa).

It belongs to the PsbP family.

Its subcellular location is the plastid. The protein localises to the chloroplast thylakoid membrane. Its function is as follows. May be involved in the regulation of photosystem II. This Physcomitrium patens (Spreading-leaved earth moss) protein is Oxygen-evolving enhancer protein 2.